Reading from the N-terminus, the 245-residue chain is Carboxy-S-adenosyl-L-methionine synthase (245 aa).

S-adenosyl-L-methionine contacts are provided by residues Tyr42, 67–69 (GCS), 92–93 (DN), 120–121 (DI), Asn135, and Arg202.

It belongs to the class I-like SAM-binding methyltransferase superfamily. Cx-SAM synthase family. In terms of assembly, homodimer.

It carries out the reaction prephenate + S-adenosyl-L-methionine = carboxy-S-adenosyl-L-methionine + 3-phenylpyruvate + H2O. In terms of biological role, catalyzes the conversion of S-adenosyl-L-methionine (SAM) to carboxy-S-adenosyl-L-methionine (Cx-SAM). In Vibrio parahaemolyticus serotype O3:K6 (strain RIMD 2210633), this protein is Carboxy-S-adenosyl-L-methionine synthase.